The following is a 363-amino-acid chain: Uroporphyrinogen decarboxylase (363 aa).

Substrate contacts are provided by residues 27–31 (RQAGR), Asp-77, Tyr-157, Thr-212, and His-333.

It belongs to the uroporphyrinogen decarboxylase family. Homodimer.

It is found in the cytoplasm. The enzyme catalyses uroporphyrinogen III + 4 H(+) = coproporphyrinogen III + 4 CO2. It functions in the pathway porphyrin-containing compound metabolism; protoporphyrin-IX biosynthesis; coproporphyrinogen-III from 5-aminolevulinate: step 4/4. In terms of biological role, catalyzes the decarboxylation of four acetate groups of uroporphyrinogen-III to yield coproporphyrinogen-III. In Cupriavidus pinatubonensis (strain JMP 134 / LMG 1197) (Cupriavidus necator (strain JMP 134)), this protein is Uroporphyrinogen decarboxylase.